We begin with the raw amino-acid sequence, 217 residues long: 3-demethoxyubiquinol 3-hydroxylase (217 aa).

Positions 66, 96, 99, 148, 180, and 183 each coordinate Fe cation.

It belongs to the COQ7 family. Requires Fe cation as cofactor.

It localises to the cell membrane. The enzyme catalyses a 5-methoxy-2-methyl-3-(all-trans-polyprenyl)benzene-1,4-diol + AH2 + O2 = a 3-demethylubiquinol + A + H2O. It functions in the pathway cofactor biosynthesis; ubiquinone biosynthesis. Catalyzes the hydroxylation of 2-nonaprenyl-3-methyl-6-methoxy-1,4-benzoquinol during ubiquinone biosynthesis. In Xanthomonas axonopodis pv. citri (strain 306), this protein is 3-demethoxyubiquinol 3-hydroxylase.